The following is a 473-amino-acid chain: Lipid A galacturonosyltransferase RgtD (473 aa).

Helical transmembrane passes span 6–26 (GLLI…FDAT), 68–88 (AIYW…LVLM), 94–114 (FVGP…PGVA), 118–138 (VFFS…LAYF), 160–180 (FLTK…LLLI), 190–210 (VIIA…WNLQ), 238–258 (FFAA…LWAV), 271–291 (KMLV…ATVA), 295–315 (ANWA…LLYL), and 327–347 (INGI…QLLL).

It is found in the cell membrane. It functions in the pathway bacterial outer membrane biogenesis; LPS lipid A biosynthesis. Involved in the modification of the lipopolysaccharide (LPS) lipid A moiety. Catalyzes the transfer of a galacturonic acid (GalA) residue to the 4'-position of 4'-dephosphorylated lipid A, using dodecaprenyl phosphate-GalA as the donor substrate. Acts before the other GalA transferases RgtA, RgtB and RgtC. The sequence is that of Lipid A galacturonosyltransferase RgtD from Rhizobium johnstonii (strain DSM 114642 / LMG 32736 / 3841) (Rhizobium leguminosarum bv. viciae).